Consider the following 1030-residue polypeptide: Leucine-rich repeat and coiled-coil domain-containing protein 1 (1030 aa).

6 LRR repeats span residues 7–28, 29–50, 51–72, 73–94, 95–116, and 121–142; these read RNRE…CLNS, NLYS…RHLC, YLQH…DSLA, SLQS…EKLF, NLKK…IPLH, and KLSH…LQST. Residues 160-200 enclose the LRRCT domain; it reads NPVCHALGYREIILENLPQLNSLDGLDRSGDPVTAHEVDSM. Positions 298 to 401 are disordered; the sequence is KSEQTKLKAK…GQILGKPHAI (104 aa). Residues 300-311 are compositionally biased toward basic and acidic residues; sequence EQTKLKAKRDTD. 2 stretches are compositionally biased toward polar residues: residues 338–368 and 378–393; these read KTSQ…SRKQ and ETSL…STGQ. Residues 432-645 adopt a coiled-coil conformation; sequence RERRWKAEQV…DLEDEFRAAL (214 aa).

It belongs to the LRRCC1 family.

It is found in the cytoplasm. It localises to the cytoskeleton. The protein localises to the microtubule organizing center. The protein resides in the centrosome. Its subcellular location is the centriole. Its function is as follows. Required for the organization of the mitotic spindle. Maintains the structural integrity of centrosomes during mitosis. The polypeptide is Leucine-rich repeat and coiled-coil domain-containing protein 1 (lrrcc1) (Xenopus laevis (African clawed frog)).